Reading from the N-terminus, the 328-residue chain is DNA-directed RNA polymerase subunit alpha (328 aa).

Positions 1–231 (MIYQMQMPAK…EHVTFFANFS (231 aa)) are alpha N-terminal domain (alpha-NTD). The interval 247–328 (DEFETMRRLL…MDITRYQMKG (82 aa)) is alpha C-terminal domain (alpha-CTD).

The protein belongs to the RNA polymerase alpha chain family. Homodimer. The RNAP catalytic core consists of 2 alpha, 1 beta, 1 beta' and 1 omega subunit. When a sigma factor is associated with the core the holoenzyme is formed, which can initiate transcription.

The enzyme catalyses RNA(n) + a ribonucleoside 5'-triphosphate = RNA(n+1) + diphosphate. Functionally, DNA-dependent RNA polymerase catalyzes the transcription of DNA into RNA using the four ribonucleoside triphosphates as substrates. This Chlorobium luteolum (strain DSM 273 / BCRC 81028 / 2530) (Pelodictyon luteolum) protein is DNA-directed RNA polymerase subunit alpha.